The chain runs to 595 residues: Adenine deaminase 3 (595 aa).

It belongs to the metallo-dependent hydrolases superfamily. Adenine deaminase family. Mn(2+) is required as a cofactor.

It carries out the reaction adenine + H2O + H(+) = hypoxanthine + NH4(+). The chain is Adenine deaminase 3 from Rhizobium meliloti (strain 1021) (Ensifer meliloti).